We begin with the raw amino-acid sequence, 310 residues long: E3 ubiquitin-protein ligase CSU1 (310 aa).

Residues 43 to 67 (CSLCLKPFIDPMCCHKGHVFCRECI) form an RING-type 1; degenerate zinc finger. A coiled-coil region spans residues 75–95 (KKDIQRRLAAHSSQKKQDKDE). The interval 110–138 (EFDQQNHSAMPRNSDKNHNEDKNGFHGAN) is disordered. Basic and acidic residues predominate over residues 122 to 133 (NSDKNHNEDKNG). An RING-type 2 zinc finger spans residues 221-263 (CPSCKVTLTNTMSLVALSSCGHVFCKKCAEKFMPVDKVCLVCD).

Belongs to the NOSIP family.

It is found in the nucleus. Its subcellular location is the nucleus speckle. The catalysed reaction is S-ubiquitinyl-[E2 ubiquitin-conjugating enzyme]-L-cysteine + [acceptor protein]-L-lysine = [E2 ubiquitin-conjugating enzyme]-L-cysteine + N(6)-ubiquitinyl-[acceptor protein]-L-lysine.. Its pathway is protein modification; protein ubiquitination. Its function is as follows. RING-finger E3 ubiquitin-protein ligase that plays an major role in maintaining COP1 homeostasis in darkness. Negatively regulates COP1 protein accumulation by targeting COP1 for ubiquitination and subsequent proteasomal degradation in dark-grown seedlings. Negatively regulates the accumulation of SPA1 protein in the dark. The sequence is that of E3 ubiquitin-protein ligase CSU1 from Arabidopsis thaliana (Mouse-ear cress).